The primary structure comprises 977 residues: MAQFYYKRNVNAPYRDRIPLRIVRAESELSPSEKAYLNAVEKGDYASVKKSLEEAEIYFKININCIDPLGRTALLIAIENENLELIELLLSFNVYVGDALLHAIRKEVVGAVELLLNHKKPSGEKQVPPILLDKQFSEFTPDITPIILAAHTNNYEIIKLLVQKGVSVPRPHEVRCNCVECVSSSDVDSLRHSRSRLNIYKALASPSLIALSSEDPFLTAFQLSWELQELSKVENEFKSEYEELSRQCKQFAKDLLDQTRSSRELEIILNYRDDNSLIEEQSGNDLARLKLAIKYRQKEFVAQPNCQQLLASRWYDEFPGWRRRHWAVKMVTCFIIGLLFPVFSVCYLIAPKSPLGLFIRKPFIKFICHTASYLTFLFLLLLASQHIDRSDLNRQGPPPTIVEWMILPWVLGFIWGEIKQMWDGGLQDYIHDWWNLMDFVMNSLYLATISLKIVAFVKYSALNPRESWDMWHPTLVAEALFAIANIFSSLRLISLFTANSHLGPLQISLGRMLLDILKFLFIYCLVLLAFANGLNQLYFYYEETKGLTCKGIRCEKQNNAFSTLFETLQSLFWSIFGLINLYVTNVKAQHEFTEFVGATMFGTYNVISLVVLLNMLIAMMNNSYQLIADHADIEWKFARTKLWMSYFEEGGTLPTPFNVIPSPKSLWYLIKWIWTHLCKKKMRRKPESFGTIGRRAADNLRRHHQYQEVMRNLVKRYVAAMIRDAKTEEGLTEENFKELKQDISSFRFEVLGLLRGSKLSTIQSANASKESSNSADSDEKSDSEGNSKDKKKNFSLFDLTTLIHPRSAAIASERHNISNGSALVVQEPPREKQRKVNFVTDIKNFGLFHRRSKQNAAEQNANQIFSVSEEVARQQAAGPLERNIQLESRGLASRGDLSIPGLSEQCVLVDHRERNTDTLGLQVGKRVCPFKSEKVVVEDTVPIIPKEKHAKEEDSSIDYDLNLPDTVTHEDYVTTRL.

Over 1 to 324 (MAQFYYKRNV…YDEFPGWRRR (324 aa)) the chain is Cytoplasmic. 4 ANK repeats span residues 29–60 (LSPS…IYFK), 71–93 (RTAL…LSFN), 96–118 (VGDA…LLNH), and 141–165 (PDIT…VQKG). 4 residues coordinate Zn(2+): His-172, Cys-176, Cys-178, and Cys-181. Residues 223–260 (LSWELQELSKVENEFKSEYEELSRQCKQFAKDLLDQTR) adopt a coiled-coil conformation. Residues 325-359 (HWAVKMVTCFIIGLLFPVFSVCYLIAPKSPLGLFI) constitute an intramembrane region (discontinuously helical). At 360-362 (RKP) the chain is on the cytoplasmic side. The helical transmembrane segment at 363–383 (FIKFICHTASYLTFLFLLLLA) threads the bilayer. Topologically, residues 384-403 (SQHIDRSDLNRQGPPPTIVE) are extracellular. A helical transmembrane segment spans residues 404–418 (WMILPWVLGFIWGEI). Residues Glu-417, Gln-420, Asn-435, and Asp-438 each coordinate Ca(2+). The Cytoplasmic segment spans residues 419–432 (KQMWDGGLQDYIHD). The chain crosses the membrane as a helical span at residues 433-453 (WWNLMDFVMNSLYLATISLKI). The Extracellular portion of the chain corresponds to 454 to 475 (VAFVKYSALNPRESWDMWHPTL). A helical transmembrane segment spans residues 476–498 (VAEALFAIANIFSSLRLISLFTA). The Cytoplasmic segment spans residues 499–511 (NSHLGPLQISLGR). A helical membrane pass occupies residues 512 to 534 (MLLDILKFLFIYCLVLLAFANGL). The Extracellular portion of the chain corresponds to 535–599 (NQLYFYYEET…HEFTEFVGAT (65 aa)). The cysteines at positions 549 and 554 are disulfide-linked. A helical membrane pass occupies residues 600–620 (MFGTYNVISLVVLLNMLIAMM). The tract at residues 615–977 (MLIAMMNNSY…THEDYVTTRL (363 aa)) is interaction with ITPR1, ITPR2 and ITPR3. The Cytoplasmic portion of the chain corresponds to 621–977 (NNSYQLIADH…THEDYVTTRL (357 aa)). The segment at 762-790 (IQSANASKESSNSADSDEKSDSEGNSKDK) is disordered. A compositionally biased stretch (low complexity) spans 764–775 (SANASKESSNSA). Residues 777–788 (SDEKSDSEGNSK) show a composition bias toward basic and acidic residues. Residues Tyr-959 and Tyr-972 each carry the phosphotyrosine; by FYN modification. The interval 975–977 (TRL) is PDZ-binding domain.

Belongs to the transient receptor (TC 1.A.4) family. STrpC subfamily. TRPC4 sub-subfamily. As to quaternary structure, homotetramer. Heterotetramer with TRPC1 and/or TRPC5. Forms a heteromeric ion channel with TRPC1, with a 1:3 TRPC1:TRPC4 stoichiometry. Interacts with TRPC4AP. Isoform alpha but not isoform beta interacts with ITPR1, ITPR2 and ITPR3. Interacts with (via PDZ-binding domain) with NHERF1. Interacts with MX1 and RNF24. Interacts (via CIRB domain) with SESTD1 (via spectrin 1 repeat). Interacts with CDH5 and CTNNB1. Interacts with SPTAN1 (via C-terminal spectrin repeats) and SPTBN5 (via C-terminus). Interacts (via protein 4.1-binding domain) with EPB41L2. Interacts with PLSCR1. In terms of processing, phosphorylation modulates TRPC channel function by regulating the level of TRPC4 at the cell surface and by increasing the association with NHERF1. As to expression, strongly expressed in placenta. Expressed at lower levels in heart, pancreas, kidney and brain. Expressed in endothelial cells. Isoform alpha was found to be the predominant isoform. Isoform beta was not found in pancreas and brain.

The protein localises to the cell membrane. It carries out the reaction Ca(2+)(in) = Ca(2+)(out). It catalyses the reaction Na(+)(in) = Na(+)(out). The enzyme catalyses Li(+)(in) = Li(+)(out). The catalysed reaction is Cs(+)(in) = Cs(+)(out). With respect to regulation, may be operated by a phosphatidylinositol second messenger system activated by receptor tyrosine kinases or G-protein coupled receptors. May be activated by intracellular calcium store depletion. Inhibited by xanthine-based inhibitor Pico145. Its function is as follows. Forms a receptor-activated non-selective calcium permeant cation channel. Acts as a cell-cell contact-dependent endothelial calcium entry channel. Forms a homomeric ion channel or a heteromeric ion channel with TRPC1; the heteromeric ion channel has reduced calcium permeability compared to the homomeric channel. Also permeable to monovalent ions including sodium, lithium and cesium ions. Forms a receptor-activated non-selective calcium permeant cation channel. The chain is Short transient receptor potential channel 4 (TRPC4) from Homo sapiens (Human).